Reading from the N-terminus, the 463-residue chain is Phosphomannomutase (463 aa).

Residue Ser103 is the Phosphoserine intermediate of the active site. Mg(2+) is bound by residues Ser103, Asp248, Asp250, and Asp252.

It belongs to the phosphohexose mutase family. Mg(2+) serves as cofactor.

The protein localises to the cell membrane. The catalysed reaction is alpha-D-mannose 1-phosphate = D-mannose 6-phosphate. The protein operates within nucleotide-sugar biosynthesis; GDP-alpha-D-mannose biosynthesis; alpha-D-mannose 1-phosphate from D-fructose 6-phosphate: step 2/2. It participates in bacterial outer membrane biogenesis; LPS O-antigen biosynthesis. In terms of biological role, involved in GDP-mannose biosynthesis which serves as the activated sugar nucleotide precursor for mannose residues in cell surface polysaccharides. This is Phosphomannomutase (rfbB) from Vibrio cholerae serotype O1 (strain ATCC 39315 / El Tor Inaba N16961).